Consider the following 449-residue polypeptide: GTPase Der (449 aa).

EngA-type G domains lie at 4-169 (PIVA…PAGE) and 177-353 (IQVA…EQHR). GTP-binding positions include 10–17 (GRPNVGKS), 57–61 (DTGGL), 120–123 (NKCE), 183–190 (GRPNVGKS), 230–234 (DTAGI), and 295–298 (NKWD). The region spanning 354 to 439 (RRVTTAVVND…PIRLLWRSKK (86 aa)) is the KH-like domain.

Belongs to the TRAFAC class TrmE-Era-EngA-EngB-Septin-like GTPase superfamily. EngA (Der) GTPase family. Associates with the 50S ribosomal subunit.

Functionally, GTPase that plays an essential role in the late steps of ribosome biogenesis. This Thermosynechococcus vestitus (strain NIES-2133 / IAM M-273 / BP-1) protein is GTPase Der.